A 191-amino-acid chain; its full sequence is LHFPL tetraspan subfamily member 7 protein (191 aa).

Transmembrane regions (helical) follow at residues 6–26 (MGSL…FSLM), 72–92 (IAAV…VLVL), 112–132 (YAQI…PFNL), and 154–174 (LGWG…LPFI).

It belongs to the TMEM211 family.

The protein resides in the membrane. The chain is LHFPL tetraspan subfamily member 7 protein (lhfpl7) from Xenopus tropicalis (Western clawed frog).